The sequence spans 172 residues: MSVASPIQCIRILNPSSSSSSSTASSSFRFSTTTKPCVFIIRCSQTEGPLRRPSAPPTLREPQKPVPPSQPSSSPPPSPPPQKAVAVDGKSVTTVEFQRQKAKELQEYFKQKKLEAAGQGPFFGFQPKNEISNGRWAMFGFAVGMLTEYATGSDLVDQVKILLSNFGILDLE.

A chloroplast-targeting transit peptide spans M1 to C43. Residues S44–R135 are Stromal-facing. The disordered stretch occupies residues Q45–K90. The segment covering K64 to Q82 has biased composition (pro residues). Residues W136 to V156 form a helical membrane-spanning segment. The Lumenal portion of the chain corresponds to D157–E172.

The protein belongs to the ELIP/psbS family. In terms of assembly, component of a high molecular weight complex containing OHP1, OHP2 and HCF244, and PSII core proteins D1/D2, HCF136 and HCF173. Forms a trimeric complex with OHP1 and HCF244 that mutually stabilizes each subunit.

The protein resides in the plastid. The protein localises to the chloroplast thylakoid membrane. In terms of biological role, may play a photoprotective role within PSI in response to light stress. Forms a trimeric complex with OHP1 and HCF244 that is required to promote PSII core subunit assembly. The trimeric complex forms a transient PSII reaction center-like complex with PsbA, PsbD, PsbE, PsbF and PsbI subunits in thylakoids for early assembly of PSII as well as PSII repair. The trimeric complex is required for the recruitment of ribosomes to the psbA mRNA during PSII biogenesis and repair. Forms a heterodimer with OHP1 that binds chlorophylls and carotenoids, and that may function in the delivery of pigments to the PsbA subunit of PSII. The sequence is that of Light-harvesting complex-like protein OHP2, chloroplastic from Arabidopsis thaliana (Mouse-ear cress).